The following is a 269-amino-acid chain: Signal recognition particle receptor subunit beta (269 aa).

The helical transmembrane segment at 35–55 (LLSVAVALLAVLLTLVFWKFI) threads the bilayer. Residues 69–77 (GLCDSGKTL) and 90–93 (TQTS) each bind GTP. Ser110 bears the Phosphoserine mark. GTP is bound by residues Gly118 and 178-181 (NKQD). Thr212 is subject to Phosphothreonine. Residue Ala246 participates in GTP binding.

The protein belongs to the SRP receptor beta subunit family. Heterodimer with SRPRA.

The protein localises to the endoplasmic reticulum membrane. In terms of biological role, component of the SRP (signal recognition particle) receptor. Ensures, in conjunction with the signal recognition particle, the correct targeting of the nascent secretory proteins to the endoplasmic reticulum membrane system. May mediate the membrane association of SR. This Mus musculus (Mouse) protein is Signal recognition particle receptor subunit beta (Srprb).